The primary structure comprises 432 residues: SVP1-like protein 2 (432 aa).

2 WD repeats span residues 223-263 (AHKS…LLYE) and 268-307 (LDRAIVTSMKFSHDDSKLAVLSDKNTLHVYNVSPLNTSSG).

This sequence belongs to the WD repeat PROPPIN family.

It is found in the vacuole membrane. Its subcellular location is the cytoplasmic vesicle membrane. Functionally, involved in mitochondrial or peroxisomal functions and amino acid signaling pathways. In Debaryomyces hansenii (strain ATCC 36239 / CBS 767 / BCRC 21394 / JCM 1990 / NBRC 0083 / IGC 2968) (Yeast), this protein is SVP1-like protein 2 (HSV2).